Consider the following 236-residue polypeptide: 2-C-methyl-D-erythritol 4-phosphate cytidylyltransferase (236 aa).

Belongs to the IspD/TarI cytidylyltransferase family. IspD subfamily.

The enzyme catalyses 2-C-methyl-D-erythritol 4-phosphate + CTP + H(+) = 4-CDP-2-C-methyl-D-erythritol + diphosphate. Its pathway is isoprenoid biosynthesis; isopentenyl diphosphate biosynthesis via DXP pathway; isopentenyl diphosphate from 1-deoxy-D-xylulose 5-phosphate: step 2/6. Its function is as follows. Catalyzes the formation of 4-diphosphocytidyl-2-C-methyl-D-erythritol from CTP and 2-C-methyl-D-erythritol 4-phosphate (MEP). The sequence is that of 2-C-methyl-D-erythritol 4-phosphate cytidylyltransferase from Burkholderia pseudomallei (strain 1106a).